We begin with the raw amino-acid sequence, 282 residues long: MRSIGFYSVLALYVGAHVTEDVDINFSLIGATGATYKTFIRNLRTKLTVGTPRVYDIPVLRNAAAGLARFQLVTLTNYNGESVTVALDVVNVYVVAYRAGNTAYFLADASTEANNVLFAGINHVRLPYGGNYDGLETAAGRISRENIELGFSEISSAIGNMFRHNPGTSVPRAFIVIIQTVSEAARFKYIEQRVSENVGTKFKPDPAFLSLQNAWGSLSEQIQIAQTRGGEFARPVELRTVSNTPTFVTNVNSPVVKGIALLLYFRVNVGTDNVFAMSLSTY.

The first 21 residues, 1–21 (MRSIGFYSVLALYVGAHVTED), serve as a signal peptide directing secretion. A glycan (N-linked (GlcNAc...) asparagine) is linked at Asn25. The active site involves Glu183.

This sequence belongs to the ribosome-inactivating protein family. Type 1 RIP subfamily.

It carries out the reaction Endohydrolysis of the N-glycosidic bond at one specific adenosine on the 28S rRNA.. Ribosome-inactivating protein of type 1, inhibits protein synthesis in animal cells. The chain is Ribosome-inactivating protein bryodin II from Bryonia dioica (Red bryony).